The primary structure comprises 165 residues: 3-isopropylmalate dehydratase small subunit (165 aa).

It belongs to the LeuD family. LeuD type 2 subfamily. Heterodimer of LeuC and LeuD.

It carries out the reaction (2R,3S)-3-isopropylmalate = (2S)-2-isopropylmalate. It participates in amino-acid biosynthesis; L-leucine biosynthesis; L-leucine from 3-methyl-2-oxobutanoate: step 2/4. In terms of biological role, catalyzes the isomerization between 2-isopropylmalate and 3-isopropylmalate, via the formation of 2-isopropylmaleate. The chain is 3-isopropylmalate dehydratase small subunit from Lachnoclostridium phytofermentans (strain ATCC 700394 / DSM 18823 / ISDg) (Clostridium phytofermentans).